The sequence spans 530 residues: Neutral amino acid transporter A (530 aa).

Position 1 is an N-acetylmethionine (Met1). Polar residues predominate over residues 1 to 10 (MEKSSETNGY). The disordered stretch occupies residues 1 to 28 (MEKSSETNGYLDSAQEGPAAGPGEPGTT). Residues 1–41 (MEKSSETNGYLDSAQEGPAAGPGEPGTTARRAGRCAGFLRR) are Cytoplasmic-facing. Over residues 16–28 (EGPAAGPGEPGTT) the composition is skewed to low complexity. The next 3 membrane-spanning stretches (helical) occupy residues 42–62 (HGLVLLTVSGVVAGAGLGAAL), 88–108 (MIILPLVVCSLVSGAASLDAS), and 119–139 (AYFGLTTLGASALAVALAFII). Residues 140–216 (KPGSGSQTLQ…VTIEKIPIGT (77 aa)) lie on the Extracellular side of the membrane. The N-linked (GlcNAc...) asparagine glycan is linked to Asn201. 6 helical membrane passes run 217 to 237 (EIEGMNILGLVLFALVLGVAL), 257 to 277 (ATMVLVSWIMWYVPVGIMFLV), 298 to 318 (IFTSILGHFIHGGIVLPLIYF), 328 to 348 (FLLGLLTPFATAFATCSSSAT), 373 to 393 (IGATVNMDGAAIFQCVAAVFI), and 418 to 438 (VGAAGVPAGGVLTIAIILEAI). A disordered region spans residues 488-530 (ELSEVKVEAIPNSKSEEETSPLVTHPNPTGPAASTPESKESVL). A phosphoserine mark is found at Ser507, Ser525, and Ser528.

This sequence belongs to the dicarboxylate/amino acid:cation symporter (DAACS) (TC 2.A.23) family. SLC1A4 subfamily.

Its subcellular location is the membrane. The protein localises to the melanosome. The catalysed reaction is L-threonine(in) + Na(+)(in) = L-threonine(out) + Na(+)(out). It catalyses the reaction L-serine(in) + Na(+)(in) = L-serine(out) + Na(+)(out). The enzyme catalyses L-cysteine(in) + Na(+)(in) = L-cysteine(out) + Na(+)(out). It carries out the reaction L-alanine(in) + Na(+)(in) = L-alanine(out) + Na(+)(out). The catalysed reaction is L-proline(in) + Na(+)(in) = L-proline(out) + Na(+)(out). It catalyses the reaction 4-hydroxy-L-proline(in) + Na(+)(in) = 4-hydroxy-L-proline(out) + Na(+)(out). In terms of biological role, sodium-dependent neutral amino-acid transporter that mediates transport of alanine, serine, cysteine, proline, hydroxyproline and threonine. The chain is Neutral amino acid transporter A (SLC1A4) from Bos taurus (Bovine).